An 89-amino-acid chain; its full sequence is Small ribosomal subunit protein uS15 (89 aa).

Belongs to the universal ribosomal protein uS15 family. Part of the 30S ribosomal subunit. Forms a bridge to the 50S subunit in the 70S ribosome, contacting the 23S rRNA.

Its function is as follows. One of the primary rRNA binding proteins, it binds directly to 16S rRNA where it helps nucleate assembly of the platform of the 30S subunit by binding and bridging several RNA helices of the 16S rRNA. In terms of biological role, forms an intersubunit bridge (bridge B4) with the 23S rRNA of the 50S subunit in the ribosome. In Lactobacillus gasseri (strain ATCC 33323 / DSM 20243 / BCRC 14619 / CIP 102991 / JCM 1131 / KCTC 3163 / NCIMB 11718 / NCTC 13722 / AM63), this protein is Small ribosomal subunit protein uS15.